A 401-amino-acid polypeptide reads, in one-letter code: (1R,4R,5S)-(-)-guaia-6,10(14)-diene synthase (401 aa).

The tract at residues 1-21 (MVKFDSGSESEMTNGDDLHIN) is disordered. 2 residues coordinate Mg(2+): Asp-134 and Glu-139. A DDXXD motif motif is present at residues 134-138 (DDQFD). Arg-242 is a substrate binding site. The Mg(2+) site is built by Asn-288 and Ser-292. Lys-295 contacts substrate. Position 296 (Asp-296) interacts with Mg(2+). 375 to 376 (RY) contacts substrate.

It belongs to the terpene synthase family. Mg(2+) serves as cofactor.

The enzyme catalyses (2E,6E)-farnesyl diphosphate = (1R,4R,5S)-(-)-guaia-6,10(14)-diene + diphosphate. Its pathway is secondary metabolite biosynthesis; terpenoid biosynthesis. In terms of biological role, catalyzes the conversion of (2E,6E)-farnesyl diphosphate (FPP) to yield the bicyclic sesquiterpene guaia-6,10(14)-diene via a 1,10-cyclization, which requires the abstraction of the pyrophosphate from FPP to yield the (E,E)-germacradienyl cation. The only accepted substrate is farnesyl diphosphate (FPP). The polypeptide is (1R,4R,5S)-(-)-guaia-6,10(14)-diene synthase (Fusarium proliferatum (strain ET1) (Orchid endophyte fungus)).